The chain runs to 534 residues: NAD(P)H-quinone oxidoreductase subunit 2 (534 aa).

A run of 14 helical transmembrane segments spans residues 15-35, 42-62, 79-99, 109-129, 132-152, 167-187, 210-230, 244-264, 280-300, 306-326, 334-354, 378-398, 410-432, and 466-486; these read ILPE…DLIL, WIGY…YFQW, LSIV…LMSI, LAEF…LSGA, LVMI…LTGY, LLIG…LYGL, LGLV…ISAA, PTPV…ALAI, FVFT…ALAQ, MLAY…IAGT, IFYL…IILF, LGLS…GFFG, GLYW…YIRV, and VGLV…NPLF.

Belongs to the complex I subunit 2 family. As to quaternary structure, NDH-1 can be composed of about 15 different subunits; different subcomplexes with different compositions have been identified which probably have different functions.

It is found in the cellular thylakoid membrane. The catalysed reaction is a plastoquinone + NADH + (n+1) H(+)(in) = a plastoquinol + NAD(+) + n H(+)(out). It carries out the reaction a plastoquinone + NADPH + (n+1) H(+)(in) = a plastoquinol + NADP(+) + n H(+)(out). NDH-1 shuttles electrons from an unknown electron donor, via FMN and iron-sulfur (Fe-S) centers, to quinones in the respiratory and/or the photosynthetic chain. The immediate electron acceptor for the enzyme in this species is believed to be plastoquinone. Couples the redox reaction to proton translocation, and thus conserves the redox energy in a proton gradient. Cyanobacterial NDH-1 also plays a role in inorganic carbon-concentration. The chain is NAD(P)H-quinone oxidoreductase subunit 2 from Nostoc punctiforme (strain ATCC 29133 / PCC 73102).